A 309-amino-acid chain; its full sequence is Acetyl-coenzyme A carboxylase carboxyl transferase subunit beta (309 aa).

In terms of domain architecture, CoA carboxyltransferase N-terminal spans 29-298; it reads NSDWTSCCKG…AINSSENETS (270 aa). Residues Cys35, Cys36, Cys52, and Cys55 each coordinate Zn(2+).

This sequence belongs to the AccD/PCCB family. In terms of assembly, acetyl-CoA carboxylase is a heterohexamer composed of biotin carboxyl carrier protein (AccB), biotin carboxylase (AccC) and two subunits each of ACCase subunit alpha (AccA) and ACCase subunit beta (AccD). Zn(2+) serves as cofactor.

The protein localises to the cytoplasm. It carries out the reaction N(6)-carboxybiotinyl-L-lysyl-[protein] + acetyl-CoA = N(6)-biotinyl-L-lysyl-[protein] + malonyl-CoA. It participates in lipid metabolism; malonyl-CoA biosynthesis; malonyl-CoA from acetyl-CoA: step 1/1. Component of the acetyl coenzyme A carboxylase (ACC) complex. Biotin carboxylase (BC) catalyzes the carboxylation of biotin on its carrier protein (BCCP) and then the CO(2) group is transferred by the transcarboxylase to acetyl-CoA to form malonyl-CoA. The chain is Acetyl-coenzyme A carboxylase carboxyl transferase subunit beta from Pelagibacter ubique (strain HTCC1062).